The chain runs to 470 residues: MGIWTSGTDIFLSLWEIYVSPRSPGWMDFIQHLGVCCLVALISVGLLSVAACWFLPSIIAAAASWIITCVLLCCSKHARCFILLVFLSCGLREGRNALIAAGTGIVILGHVENIFHNFKGLLDGMTCNLRAKSFSIHFPLLKKYIEAIQWIYGLATPLSVFDDLVSWNQTLAVSLFSPSHVLEAQLNDSKGEVLSVLYQMATTTEVLSSLGQKLLAFAGLSLVLLGTGLFMKRFLGPCGWKYENIYITRQFVQFDERERHQQRPCVLPLNKEERRKYVIIPTFWPTPKERKNLGLFFLPILIHLCIWVLFAAVDYLLYRLIFSVSKQFQSLPGFEVHLKLHGEKQGTQDIIHDSSFNISVFEPNCIPKPKFLLSETWVPLSVILLILVMLGLLSSILMQLKILVSASFYPSVERKRIQYLHAKLLKKRSKQPLGEVKRRLSLYLTKIHFWLPVLKMIRKKQMDMASADKS.

The Cytoplasmic segment spans residues Met-1–Gly-34. Residues Val-35–Leu-55 form a helical membrane-spanning segment. The Extracellular segment spans residues Pro-56–Ser-57. The helical transmembrane segment at Ile-58 to Ala-78 threads the bilayer. The Cytoplasmic segment spans residues Arg-79 to Ala-97. Residues Leu-98–Phe-118 form a helical membrane-spanning segment. Topologically, residues Lys-119–Ser-209 are extracellular. A helical transmembrane segment spans residues Leu-210–Phe-230. The Cytoplasmic segment spans residues Met-231–Asn-292. A helical membrane pass occupies residues Leu-293–Val-313. Topologically, residues Asp-314 to Thr-376 are extracellular. A helical transmembrane segment spans residues Trp-377–Leu-397. Residues Met-398–Ser-470 are Cytoplasmic-facing.

Monomer. Homodimer. Isoform 1 interacts (via the C-terminus cytoplasmic tail) with OS9 isoform 1 (via the C-terminus tail); the interaction induces DCSTAMP redistribution to the endoplasmic reticulum-Golgi intermediate compartment. Isoform 1 interacts (via the C-terminus cytoplasmic tail) with OS9 isoform 2 (via the C-terminus tail). Interacts with CREB3. Glycosylated. As to expression, preferentially expressed by dendritic cells (DCs). Detected in both immature and mature DCs. Highly expressed in lymph nodes, lung, kidney and liver. Expressed at lower levels in pancreas, bone marrow, spleen, leukocytes, in freshly isolated peripheral blood mononuclear cells (PBMC) and B-cells. Not expressed in freshly isolated monocytes.

It localises to the cell membrane. Its subcellular location is the endoplasmic reticulum membrane. The protein localises to the endoplasmic reticulum-Golgi intermediate compartment membrane. It is found in the endosome. Probable cell surface receptor that plays several roles in cellular fusion, cell differentiation, bone and immune homeostasis. Plays a role in TNFSF11-mediated osteoclastogenesis. Cooperates with OCSTAMP in modulating cell-cell fusion in both osteoclasts and foreign body giant cells (FBGCs). Participates in osteoclast bone resorption. Involved in inducing the expression of tartrate-resistant acid phosphatase in osteoclast precursors. Plays a role in haematopoietic stem cell differentiation of bone marrow cells toward the myeloid lineage. Inhibits the development of neutrophilic granulocytes. Plays also a role in the regulation of dendritic cell (DC) antigen presentation activity by controlling phagocytic activity. Involved in the maintenance of immune self-tolerance and avoidance of autoimmune reactions. This chain is Dendritic cell-specific transmembrane protein (DCSTAMP), found in Homo sapiens (Human).